We begin with the raw amino-acid sequence, 305 residues long: ATP-dependent Clp protease proteolytic subunit-related protein 4, chloroplastic (305 aa).

A chloroplast-targeting transit peptide spans 1–68 (MEVAAATATS…SSDLCGAKLR (68 aa)).

This sequence belongs to the peptidase S14 family. In terms of assembly, component of the chloroplastic Clp protease core complex which consist of at least 16 proteins: CLPP4 (3 copies), CLPP5 (3 copies), CLPR4 (2 copies), ClpP1 (1 copy), CLPP6 (1 copy), CLPR2 (1 copy), CLPT1 (1 copy), CLPT2 (1 copy) and 3 copies of CLPP3 and/or CLPR1 and/or CLPR3. The core complex is organized in two heptameric rings, one containing CLPP3,4,5,6 in a 1:2:3:1 ratio and the other CLPP1 and CLPR1,2,3,4 in a 3:1:1:1:1 ratio.

It is found in the plastid. The protein localises to the chloroplast. Involved in plastid protein homeostasis. The polypeptide is ATP-dependent Clp protease proteolytic subunit-related protein 4, chloroplastic (Arabidopsis thaliana (Mouse-ear cress)).